The primary structure comprises 199 residues: Charged multivesicular body protein 1b (199 aa).

2 coiled-coil regions span residues 10-30 (NLKF…KEEK) and 178-199 (TSVA…RDQV). A disordered region spans residues 167 to 199 (ELPQGQTGSVGTSVASAEQDELSQRLAKLRDQV). Polar residues predominate over residues 170–182 (QGQTGSVGTSVAS). An MIT-interacting motif motif is present at residues 186 to 196 (DELSQRLAKLR).

It belongs to the SNF7 family. In terms of assembly, probable peripherally associated component of the endosomal sorting required for transport complex III (ESCRT-III).

It is found in the cytoplasm. The protein resides in the cytosol. It localises to the endosome. Its subcellular location is the late endosome membrane. In terms of biological role, probable peripherally associated component of the endosomal sorting required for transport complex III (ESCRT-III) which is involved in multivesicular bodies (MVBs) formation and sorting of endosomal cargo proteins into MVBs. MVBs contain intraluminal vesicles (ILVs) that are generated by invagination and scission from the limiting membrane of the endosome and mostly are delivered to lysosomes enabling degradation of membrane proteins, such as stimulated growth factor receptors, lysosomal enzymes and lipids. This is Charged multivesicular body protein 1b (chmp1b) from Danio rerio (Zebrafish).